A 203-amino-acid chain; its full sequence is Glycerol-3-phosphate acyltransferase (203 aa).

The next 4 helical transmembrane spans lie at Leu-6–Val-26, Ala-82–Phe-102, Ala-118–Ile-138, and Tyr-141–Asp-161.

The protein belongs to the PlsY family. Probably interacts with PlsX.

Its subcellular location is the cell inner membrane. It carries out the reaction an acyl phosphate + sn-glycerol 3-phosphate = a 1-acyl-sn-glycero-3-phosphate + phosphate. It functions in the pathway lipid metabolism; phospholipid metabolism. Its function is as follows. Catalyzes the transfer of an acyl group from acyl-phosphate (acyl-PO(4)) to glycerol-3-phosphate (G3P) to form lysophosphatidic acid (LPA). This enzyme utilizes acyl-phosphate as fatty acyl donor, but not acyl-CoA or acyl-ACP. This chain is Glycerol-3-phosphate acyltransferase, found in Shewanella sp. (strain ANA-3).